A 98-amino-acid chain; its full sequence is ATP-dependent Clp protease adapter protein ClpS (98 aa).

It belongs to the ClpS family. Binds to the N-terminal domain of the chaperone ClpA.

Involved in the modulation of the specificity of the ClpAP-mediated ATP-dependent protein degradation. This is ATP-dependent Clp protease adapter protein ClpS from Synechocystis sp. (strain ATCC 27184 / PCC 6803 / Kazusa).